We begin with the raw amino-acid sequence, 61 residues long: UPF0312 protein (61 aa).

Belongs to the UPF0312 family.

In Delftia acidovorans (Pseudomonas acidovorans), this protein is UPF0312 protein.